The sequence spans 451 residues: Phosphoglucosamine mutase (451 aa).

The active-site Phosphoserine intermediate is S102. Residues S102, D243, D245, and D247 each contribute to the Mg(2+) site. S102 bears the Phosphoserine mark.

It belongs to the phosphohexose mutase family. It depends on Mg(2+) as a cofactor. Post-translationally, activated by phosphorylation.

It catalyses the reaction alpha-D-glucosamine 1-phosphate = D-glucosamine 6-phosphate. Functionally, catalyzes the conversion of glucosamine-6-phosphate to glucosamine-1-phosphate. The sequence is that of Phosphoglucosamine mutase from Chelativorans sp. (strain BNC1).